Reading from the N-terminus, the 483-residue chain is Probable glycosyltransferase 6 (483 aa).

Over 1–40 (MAASETAPFGVSAASKGGGGVAGARAQHGQLAVAGRVHDA) the chain is Cytoplasmic. A helical; Signal-anchor for type II membrane protein transmembrane segment spans residues 41–61 (LVFAAGAVAAVLVLLATASFL). Residues 62–483 (SPMPVTNLVA…PLPFDYPAAR (422 aa)) lie on the Lumenal side of the membrane. An N-linked (GlcNAc...) asparagine glycan is attached at Asn-144.

Belongs to the glycosyltransferase 34 family.

It localises to the golgi apparatus membrane. Its function is as follows. Probable glycosyltransferase that may be involved in the biosynthesis of xyloglucan. This is Probable glycosyltransferase 6 from Oryza sativa subsp. japonica (Rice).